Consider the following 252-residue polypeptide: 3-dehydroquinate dehydratase (252 aa).

Residues S21, 46–48 (EWR), and R82 contribute to the 3-dehydroquinate site. The active-site Proton donor/acceptor is the H143. K170 acts as the Schiff-base intermediate with substrate in catalysis. The 3-dehydroquinate site is built by R213, S232, and Q236.

It belongs to the type-I 3-dehydroquinase family. In terms of assembly, homodimer.

It catalyses the reaction 3-dehydroquinate = 3-dehydroshikimate + H2O. Its pathway is metabolic intermediate biosynthesis; chorismate biosynthesis; chorismate from D-erythrose 4-phosphate and phosphoenolpyruvate: step 3/7. In terms of biological role, involved in the third step of the chorismate pathway, which leads to the biosynthesis of aromatic amino acids. Catalyzes the cis-dehydration of 3-dehydroquinate (DHQ) and introduces the first double bond of the aromatic ring to yield 3-dehydroshikimate. The polypeptide is 3-dehydroquinate dehydratase (Shigella boydii serotype 4 (strain Sb227)).